A 336-amino-acid polypeptide reads, in one-letter code: Dihydroorotate dehydrogenase (quinone) (336 aa).

FMN-binding positions include 62-66 (AGLDK) and T86. K66 is a binding site for substrate. Position 111-115 (111-115 (NRMGF)) interacts with substrate. Residues N139 and N172 each contribute to the FMN site. N172 contributes to the substrate binding site. The active-site Nucleophile is the S175. N177 contacts substrate. FMN-binding residues include K217 and T245. 246 to 247 (NT) contacts substrate. Residues G268, G297, and 318–319 (YS) each bind FMN.

Belongs to the dihydroorotate dehydrogenase family. Type 2 subfamily. Monomer. Requires FMN as cofactor.

The protein localises to the cell membrane. It catalyses the reaction (S)-dihydroorotate + a quinone = orotate + a quinol. It functions in the pathway pyrimidine metabolism; UMP biosynthesis via de novo pathway; orotate from (S)-dihydroorotate (quinone route): step 1/1. Functionally, catalyzes the conversion of dihydroorotate to orotate with quinone as electron acceptor. The sequence is that of Dihydroorotate dehydrogenase (quinone) from Escherichia coli (strain SE11).